Reading from the N-terminus, the 294-residue chain is uncharacterized protein (294 aa).

This is an uncharacterized protein from Bacillus subtilis (strain 168).